The primary structure comprises 466 residues: Hydroxyproline dehydrogenase (466 aa).

The protein belongs to the proline oxidase family. Requires FAD as cofactor.

It carries out the reaction trans-4-hydroxy-L-proline + a quinone = (3R,5S)-1-pyrroline-3-hydroxy-5-carboxylate + a quinol + H(+). The catalysed reaction is L-proline + a quinone = (S)-1-pyrroline-5-carboxylate + a quinol + H(+). It functions in the pathway amino-acid degradation; L-proline degradation into L-glutamate; L-glutamate from L-proline: step 1/2. In terms of biological role, dehydrogenase that converts trans-4-L-hydroxyproline to delta-1-pyrroline-3-hydroxy-5-carboxylate (Hyp) using a quinone as the terminal electron acceptor. Can also use proline as a substrate but with a very much lower efficiency. Does not react with other diastereomers of Hyp: trans-4-D-hydroxyproline and cis-4-L-hydroxyproline. This is Hydroxyproline dehydrogenase (prodh2) from Xenopus laevis (African clawed frog).